The primary structure comprises 366 residues: NADH-quinone oxidoreductase subunit D (366 aa).

This sequence belongs to the complex I 49 kDa subunit family. In terms of assembly, NDH-1 is composed of 14 different subunits. Subunits NuoB, C, D, E, F, and G constitute the peripheral sector of the complex.

It is found in the cell membrane. The catalysed reaction is a quinone + NADH + 5 H(+)(in) = a quinol + NAD(+) + 4 H(+)(out). In terms of biological role, NDH-1 shuttles electrons from NADH, via FMN and iron-sulfur (Fe-S) centers, to quinones in the respiratory chain. The immediate electron acceptor for the enzyme in this species is believed to be a menaquinone. Couples the redox reaction to proton translocation (for every two electrons transferred, four hydrogen ions are translocated across the cytoplasmic membrane), and thus conserves the redox energy in a proton gradient. The chain is NADH-quinone oxidoreductase subunit D from Bacillus mycoides (strain KBAB4) (Bacillus weihenstephanensis).